Here is a 346-residue protein sequence, read N- to C-terminus: Partitioning defective 6 homolog alpha (346 aa).

The tract at residues 1-116 (MARPQRTPAR…SNSLQRRKKG (116 aa)) is interaction with PRKCI and PRKCZ. In terms of domain architecture, PB1 spans 15–95 (IVEVKSKFDA…PPLRLLVQKR (81 aa)). An interaction with PARD3 and CDC42 region spans residues 126–253 (RTRPPLLISL…VTVKPANQRN (128 aa)). The 18-residue stretch at 133 to 150 (ISLPQDFRQVSSVIDVDL) folds into the Pseudo-CRIB domain. In terms of domain architecture, PDZ spans 157-250 (RVRLHKHGSD…NLIVTVKPAN (94 aa)). Disordered regions lie at residues 257–294 (RGASGRLTGPSSVGPGPTDPDSDDDNSDPVIENRHPPC) and 317–346 (GSSLPSLDSREQANSGWGNGMRGDVSGFSL). At S278 the chain carries Phosphoserine. Residues 317–332 (GSSLPSLDSREQANSG) show a composition bias toward polar residues. S345 is subject to Phosphoserine.

This sequence belongs to the PAR6 family. As to quaternary structure, interacts with PALS1 and CRB3. Interacts with PARD3. Interacts with GTP-bound forms of CDC42, RHOQ/TC10 and RAC1. Interacts with the N-terminal part of PRKCI and PRKCZ. Part of a complex with PARD3, CDC42 or RAC1 and PRKCI or PRKCZ. Part of a complex with LLGL1 and PRKCI. Interacts with MAP2K5. Interacts with TGFBR1; involved in TGF-beta induced epithelial to mesenchymal transition. Interacts with ECT2 ('Thr-359' phosphorylated form) and PRKCI. Interacts with DCTN1 and PCM1. In terms of processing, phosphorylated by the TGF-beta receptor. Ubiquitinated by the SCF(FBXO31) complex, leading to its proteasomal degradation.

It is found in the cytoplasm. Its subcellular location is the cell membrane. It localises to the cell junction. The protein resides in the tight junction. The protein localises to the cytoskeleton. It is found in the microtubule organizing center. Its subcellular location is the centrosome. It localises to the centriolar satellite. Functionally, adapter protein involved in asymmetrical cell division and cell polarization processes. Probably involved in the formation of epithelial tight junctions. Association with PARD3 may prevent the interaction of PARD3 with F11R/JAM1, thereby preventing tight junction assembly. The PARD6-PARD3 complex links GTP-bound Rho small GTPases to atypical protein kinase C proteins. Regulates centrosome organization and function. Essential for the centrosomal recruitment of key proteins that control centrosomal microtubule organization. The sequence is that of Partitioning defective 6 homolog alpha (Pard6a) from Rattus norvegicus (Rat).